The chain runs to 192 residues: UPF0312 protein Ent638_1570 (192 aa).

An N-terminal signal peptide occupies residues 1–22 (MKKRLLGIALGSLLFTTGSAVA).

The protein belongs to the UPF0312 family. Type 1 subfamily.

The protein localises to the periplasm. This is UPF0312 protein Ent638_1570 from Enterobacter sp. (strain 638).